We begin with the raw amino-acid sequence, 288 residues long: Putative aryl-alcohol dehydrogenase AAD10 (288 aa).

It belongs to the aldo/keto reductase family. Aldo/keto reductase 2 subfamily.

The sequence is that of Putative aryl-alcohol dehydrogenase AAD10 (AAD10) from Saccharomyces cerevisiae (strain ATCC 204508 / S288c) (Baker's yeast).